Reading from the N-terminus, the 100-residue chain is Small ribosomal subunit protein uS14 (100 aa).

The protein belongs to the universal ribosomal protein uS14 family. As to quaternary structure, part of the 30S ribosomal subunit. Contacts proteins S3 and S10.

Binds 16S rRNA, required for the assembly of 30S particles and may also be responsible for determining the conformation of the 16S rRNA at the A site. The protein is Small ribosomal subunit protein uS14 of Synechococcus sp. (strain RCC307).